Reading from the N-terminus, the 194-residue chain is Peptidyl-tRNA hydrolase (194 aa).

Tyr17 contacts tRNA. Residue His22 is the Proton acceptor of the active site. 3 residues coordinate tRNA: Tyr68, Asn70, and Asn116.

Belongs to the PTH family. As to quaternary structure, monomer.

The protein localises to the cytoplasm. The catalysed reaction is an N-acyl-L-alpha-aminoacyl-tRNA + H2O = an N-acyl-L-amino acid + a tRNA + H(+). In terms of biological role, hydrolyzes ribosome-free peptidyl-tRNAs (with 1 or more amino acids incorporated), which drop off the ribosome during protein synthesis, or as a result of ribosome stalling. Catalyzes the release of premature peptidyl moieties from peptidyl-tRNA molecules trapped in stalled 50S ribosomal subunits, and thus maintains levels of free tRNAs and 50S ribosomes. In Pseudomonas putida (strain GB-1), this protein is Peptidyl-tRNA hydrolase.